The following is a 157-amino-acid chain: RNA-binding protein 3 (157 aa).

Residues 6–84 enclose the RRM domain; the sequence is GKLFVGGLNF…RQIRVDHAGK (79 aa). Arg47 is subject to Omega-N-methylarginine. The interval 81 to 157 is disordered; it reads HAGKSARGTR…GGNYRDNYDN (77 aa). The residue at position 105 (Arg105) is an Asymmetric dimethylarginine; alternate. Position 105 is a dimethylated arginine; in A2780 ovarian carcinoma cell line (Arg105). At Arg105 the chain carries Omega-N-methylarginine; alternate. Gly residues predominate over residues 105 to 114; the sequence is RGGGDQGYGS. Omega-N-methylarginine occurs at positions 121 and 131. Ser147 is subject to Phosphoserine. Tyr155 carries the phosphotyrosine modification.

As to quaternary structure, interacts with RPL4. Associates with the 60S ribosomal subunits in an RNA-independent manner. Associates with ribosomes. Post-translationally, arg-105 is dimethylated, probably to asymmetric dimethylarginine. In terms of processing, phosphorylated.

It is found in the nucleus. It localises to the cytoplasm. The protein localises to the cell projection. Its subcellular location is the dendrite. Its function is as follows. Cold-inducible mRNA binding protein that enhances global protein synthesis at both physiological and mild hypothermic temperatures. Reduces the relative abundance of microRNAs, when overexpressed. Enhances phosphorylation of translation initiation factors and active polysome formation. The polypeptide is RNA-binding protein 3 (RBM3) (Homo sapiens (Human)).